A 191-amino-acid polypeptide reads, in one-letter code: Large ribosomal subunit protein uL6B (191 aa).

The protein belongs to the universal ribosomal protein uL6 family. Component of the large ribosomal subunit (LSU). Mature yeast ribosomes consist of a small (40S) and a large (60S) subunit. The 40S small subunit contains 1 molecule of ribosomal RNA (18S rRNA) and 33 different proteins (encoded by 57 genes). The large 60S subunit contains 3 rRNA molecules (25S, 5.8S and 5S rRNA) and 46 different proteins (encoded by 81 genes).

The protein localises to the cytoplasm. Its function is as follows. Component of the ribosome, a large ribonucleoprotein complex responsible for the synthesis of proteins in the cell. The small ribosomal subunit (SSU) binds messenger RNAs (mRNAs) and translates the encoded message by selecting cognate aminoacyl-transfer RNA (tRNA) molecules. The large subunit (LSU) contains the ribosomal catalytic site termed the peptidyl transferase center (PTC), which catalyzes the formation of peptide bonds, thereby polymerizing the amino acids delivered by tRNAs into a polypeptide chain. The nascent polypeptides leave the ribosome through a tunnel in the LSU and interact with protein factors that function in enzymatic processing, targeting, and the membrane insertion of nascent chains at the exit of the ribosomal tunnel. The polypeptide is Large ribosomal subunit protein uL6B (Saccharomyces cerevisiae (strain ATCC 204508 / S288c) (Baker's yeast)).